Here is a 623-residue protein sequence, read N- to C-terminus: Membrane protein insertase YidC (623 aa).

A helical transmembrane segment spans residues 8–28; sequence LILATGLSFLVIMVWFFLFPP. Residues 33-64 form a disordered region; that stretch reads TEGEPTVATQQTAVAPSATPDAPTTAVPPDAD. The span at 44-62 shows a compositional bias: low complexity; the sequence is TAVAPSATPDAPTTAVPPD. The next 4 helical transmembrane spans lie at 379-399, 449-469, 507-527, and 543-563; these read MGLA…PLAY, LPIL…FVTI, TTMA…SMWL, and IFAW…SGLV. A compositionally biased stretch (low complexity) spans 601 to 617; it reads KPAAQPAGKAANDGAAP. Residues 601–623 form a disordered region; the sequence is KPAAQPAGKAANDGAAPAKKRKP.

It belongs to the OXA1/ALB3/YidC family. Type 1 subfamily. In terms of assembly, interacts with the Sec translocase complex via SecD. Specifically interacts with transmembrane segments of nascent integral membrane proteins during membrane integration.

The protein resides in the cell inner membrane. Required for the insertion and/or proper folding and/or complex formation of integral membrane proteins into the membrane. Involved in integration of membrane proteins that insert both dependently and independently of the Sec translocase complex, as well as at least some lipoproteins. Aids folding of multispanning membrane proteins. The sequence is that of Membrane protein insertase YidC from Cereibacter sphaeroides (strain KD131 / KCTC 12085) (Rhodobacter sphaeroides).